The chain runs to 520 residues: MQKEKYKKYFEIDGSFKKSFLYPLIFREYIYIVTYARGLNEYGSIFSENLGYDNKLSLLIIKRLITRMNQPDHFKILSTDSEQPTLFRYNNILYFQMISVGLATIIEIPFSLKSLCSFERLHIVKSQNLRSIHSIFPFLEDKLAHLNYVSTGLIPYPIHLEKLVQAVRFWIKDSACLHLLRLFFHEYSNWNSQFISNKLISFIFFCKKEFKTFMVLYNIYIYENESILFFLRNQVFYLRSTFSSFLLERNFFYEKMEQFTEVFDNCFGIVLWLFKDTFMHYARYQGKFFLASKGTPLRIKKWKYYLVNLWQCRFFVWSQPENIYLNSLSKHSVHFLGYLSSLGLNPSVFRSQMVENSFLIDNRKCKLDTKIPIFSLISALEKAKFCNAVGHPISKPTWAHSPDSDIIDRFVCICKNLSHYYSGSSTKSLYRIKYILRLSCVKTLARKHKSTVRIFLKRLGSGLLEEFFTEEKRILSLIPRTSSISQRLYKGRVWYLDIVCINELAHHKNLFMKHGNRNSP.

The protein belongs to the intron maturase 2 family. MatK subfamily.

It localises to the plastid. Its subcellular location is the chloroplast. Functionally, usually encoded in the trnK tRNA gene intron. Probably assists in splicing its own and other chloroplast group II introns. The chain is Maturase K from Linum perenne (Perennial flax).